The primary structure comprises 272 residues: Sulfate transporter CysZ (272 aa).

4 helical membrane passes run Phe29–Ile49, Trp66–Phe86, Ile148–Leu168, and Phe219–Trp239.

The protein belongs to the CysZ family.

The protein resides in the cell inner membrane. Its function is as follows. High affinity, high specificity proton-dependent sulfate transporter, which mediates sulfate uptake. Provides the sulfur source for the cysteine synthesis pathway. This chain is Sulfate transporter CysZ, found in Haemophilus influenzae (strain ATCC 51907 / DSM 11121 / KW20 / Rd).